Reading from the N-terminus, the 47-residue chain is Delta-stichotoxin-Hcr3a (47 aa).

Proline 3 is modified (hydroxyproline). Intrachain disulfides connect cysteine 4-cysteine 44, cysteine 6-cysteine 34, and cysteine 27-cysteine 45.

This sequence belongs to the sea anemone sodium channel inhibitory toxin family. Type I subfamily.

It is found in the secreted. The protein resides in the nematocyst. In terms of biological role, inhibits voltage-gated sodium channels (Nav). This Radianthus crispa (Leathery sea anemone) protein is Delta-stichotoxin-Hcr3a.